The primary structure comprises 95 residues: FXYD domain-containing ion transport regulator 6 (95 aa).

Residues 1 to 18 (MELVLVFLCSLLAPMVLA) form the signal peptide. The Extracellular portion of the chain corresponds to 19 to 35 (SAAEKEKEMDPFHYDYQ). The chain crosses the membrane as a helical span at residues 36-57 (TLRIGGLVFAVVLFSVGILLIL). Residues 58 to 95 (SRRCKCSFNQKPRAPGDEEAQVENLITANATEPQKAEN) are Cytoplasmic-facing. The tract at residues 69-95 (PRAPGDEEAQVENLITANATEPQKAEN) is disordered.

This sequence belongs to the FXYD family. As to quaternary structure, regulatory subunit of the sodium/potassium-transporting ATPase which is composed of a catalytic alpha subunit, a non-catalytic beta subunit and an additional regulatory subunit. The regulatory subunit, a member of the FXYD protein family, modulates the enzymatic activity in a tissue- and isoform-specific way by changing affinities of the Na+/K+-ATPase toward Na(+), K(+) or ATP.

The protein localises to the cell membrane. Its function is as follows. Associates with and regulates the activity of the sodium/potassium-transporting ATPase (NKA) which catalyzes the hydrolysis of ATP coupled with the exchange of Na(+) and K(+) ions across the plasma membrane. Reduces the apparent affinity for intracellular Na(+) with no change in the apparent affinity for extracellular K(+). In addition to modulating NKA kinetics, may also function as a regulator of NKA localization to the plasma membrane. The protein is FXYD domain-containing ion transport regulator 6 of Homo sapiens (Human).